The chain runs to 114 residues: Large ribosomal subunit protein uL22 (114 aa).

This sequence belongs to the universal ribosomal protein uL22 family. As to quaternary structure, part of the 50S ribosomal subunit.

Its function is as follows. This protein binds specifically to 23S rRNA; its binding is stimulated by other ribosomal proteins, e.g. L4, L17, and L20. It is important during the early stages of 50S assembly. It makes multiple contacts with different domains of the 23S rRNA in the assembled 50S subunit and ribosome. Functionally, the globular domain of the protein is located near the polypeptide exit tunnel on the outside of the subunit, while an extended beta-hairpin is found that lines the wall of the exit tunnel in the center of the 70S ribosome. The protein is Large ribosomal subunit protein uL22 of Alcanivorax borkumensis (strain ATCC 700651 / DSM 11573 / NCIMB 13689 / SK2).